The primary structure comprises 156 residues: ATP synthase subunit b (156 aa).

The chain crosses the membrane as a helical span at residues 11 to 31 (AIAFVLFVLFCMKYVWPPIMA).

This sequence belongs to the ATPase B chain family. As to quaternary structure, F-type ATPases have 2 components, F(1) - the catalytic core - and F(0) - the membrane proton channel. F(1) has five subunits: alpha(3), beta(3), gamma(1), delta(1), epsilon(1). F(0) has three main subunits: a(1), b(2) and c(10-14). The alpha and beta chains form an alternating ring which encloses part of the gamma chain. F(1) is attached to F(0) by a central stalk formed by the gamma and epsilon chains, while a peripheral stalk is formed by the delta and b chains.

Its subcellular location is the cell inner membrane. F(1)F(0) ATP synthase produces ATP from ADP in the presence of a proton or sodium gradient. F-type ATPases consist of two structural domains, F(1) containing the extramembraneous catalytic core and F(0) containing the membrane proton channel, linked together by a central stalk and a peripheral stalk. During catalysis, ATP synthesis in the catalytic domain of F(1) is coupled via a rotary mechanism of the central stalk subunits to proton translocation. In terms of biological role, component of the F(0) channel, it forms part of the peripheral stalk, linking F(1) to F(0). This is ATP synthase subunit b from Cronobacter sakazakii (strain ATCC BAA-894) (Enterobacter sakazakii).